The sequence spans 218 residues: MGEPVVVGRVGRPHGIRGDVTVDVRTDLPERRFAPGARLVRQVADGPASRPAADAAGAADAVGTAAGPGSAGDSGAARAAGPPVATVLSVVASRWHSGRLLVRFDGVTDRDAAEALRGSFLTIDSDECGPAVDPDDEDDDGELWWDRDLVGLHARTPAGDVLGEVVDVIHSPGGEILAIGRPEGGEYLVPFVREIVPTVDPAAGHIVVDPPPGLLDLD.

In terms of domain architecture, PRC barrel spans Gly141–Leu214.

The protein belongs to the RimM family. Binds ribosomal protein uS19.

The protein resides in the cytoplasm. Functionally, an accessory protein needed during the final step in the assembly of 30S ribosomal subunit, possibly for assembly of the head region. Essential for efficient processing of 16S rRNA. May be needed both before and after RbfA during the maturation of 16S rRNA. It has affinity for free ribosomal 30S subunits but not for 70S ribosomes. This is Ribosome maturation factor RimM from Parafrankia sp. (strain EAN1pec).